Reading from the N-terminus, the 432-residue chain is D-amino acid dehydrogenase (432 aa).

3–17 contributes to the FAD binding site; that stretch reads VVILGSGVVGVTSAW.

This sequence belongs to the DadA oxidoreductase family. The cofactor is FAD.

It catalyses the reaction a D-alpha-amino acid + A + H2O = a 2-oxocarboxylate + AH2 + NH4(+). It functions in the pathway amino-acid degradation; D-alanine degradation; NH(3) and pyruvate from D-alanine: step 1/1. Its function is as follows. Oxidative deamination of D-amino acids. The chain is D-amino acid dehydrogenase from Escherichia fergusonii (strain ATCC 35469 / DSM 13698 / CCUG 18766 / IAM 14443 / JCM 21226 / LMG 7866 / NBRC 102419 / NCTC 12128 / CDC 0568-73).